The primary structure comprises 462 residues: Glutamate decarboxylase alpha (462 aa).

The residue at position 273 (K273) is an N6-(pyridoxal phosphate)lysine.

The protein belongs to the group II decarboxylase family. The cofactor is pyridoxal 5'-phosphate.

The catalysed reaction is L-glutamate + H(+) = 4-aminobutanoate + CO2. In terms of biological role, converts internalized glutamate to GABA and increases the internal pH. Involved in glutamate-dependent acid resistance in gastric fluid. In Listeria monocytogenes serovar 1/2a (strain ATCC BAA-679 / EGD-e), this protein is Glutamate decarboxylase alpha (gadA).